The following is a 66-amino-acid chain: Pancreatic polypeptide prohormone (66 aa).

Residue Y36 is modified to Tyrosine amide. Positions E60–V66 are excised as a propeptide.

The protein belongs to the NPY family.

It is found in the secreted. Its function is as follows. Hormone secreted by pancreatic cells that acts as a regulator of pancreatic and gastrointestinal functions probably by signaling through the G protein-coupled receptor NPY4R2. The polypeptide is Pancreatic polypeptide prohormone (PPY) (Felis catus (Cat)).